The sequence spans 301 residues: Ribosome-inactivating protein (301 aa).

Positions 1 to 16 are cleaved as a propeptide — or 12 (in 10% of the molecules); the sequence is MAEITLEPSDLMAQTN. A propeptide spanning residues 162–186 is cleaved from the precursor; it reads MATLEEEEVKMQMQMPEAADLAAAA. E207 is an active-site residue. Positions 258–301 are excised as a propeptide; that stretch reads VIPDMQKLGIKDKNEAARIVALVKNQTTAAAATAASADNDDDEA.

This sequence belongs to the ribosome-inactivating protein family. Type 1 RIP subfamily. As to quaternary structure, synthesized and stored in the kernel as a 34 kDa inactive precursor. During germination, this neutral precursor is converted into a basic, active form by limited proteolysis, which removes 25 AA of net charge -6 from the center of the polypeptide chain. Additional processing also occurs at the N- and C-termini of the polypeptide. A two-chain active RIP (comprised of 16.5 and 8.5 kDa fragments that remain tightly associated) is produced from this processing event.

The enzyme catalyses Endohydrolysis of the N-glycosidic bond at one specific adenosine on the 28S rRNA.. Potent catalytic inactivator of eukaryotic protein synthesis. It may be a component of natural defense mechanisms involved in protecting the kernel against soil-borne fungal infections. The chain is Ribosome-inactivating protein from Zea mays (Maize).